The chain runs to 152 residues: MMKKIDVKILDARVGTDFPLPTYATSGSAGLDLRACLNEATVLQPGATTLLPTGLAIHIADPQLAAVILPRSGLGHKHGVVLGNLVGLIDSDYQGPLMVSVWNRGQDSFTIEPGERIAQMVFVPVVQAEFNLVNDFDASVRGEGGFGHSGRQ.

Substrate contacts are provided by residues 71–73 (RSG), Asn-84, 88–90 (LID), and Met-98.

Belongs to the dUTPase family. The cofactor is Mg(2+).

It catalyses the reaction dUTP + H2O = dUMP + diphosphate + H(+). It functions in the pathway pyrimidine metabolism; dUMP biosynthesis; dUMP from dCTP (dUTP route): step 2/2. Its function is as follows. This enzyme is involved in nucleotide metabolism: it produces dUMP, the immediate precursor of thymidine nucleotides and it decreases the intracellular concentration of dUTP so that uracil cannot be incorporated into DNA. The polypeptide is Deoxyuridine 5'-triphosphate nucleotidohydrolase (Erwinia tasmaniensis (strain DSM 17950 / CFBP 7177 / CIP 109463 / NCPPB 4357 / Et1/99)).